A 65-amino-acid polypeptide reads, in one-letter code: uncharacterized protein (65 aa).

The disordered stretch occupies residues 1-30; it reads MPAASLESLLPPPPGKLPSPPLRPHGKFQR. Positions 10-23 are enriched in pro residues; the sequence is LPPPPGKLPSPPLR.

This is an uncharacterized protein from Homo sapiens (Human).